Reading from the N-terminus, the 486-residue chain is MTTFYTVISWLSVFGYWLLIAGVTLRILMKRRAVPSAMAWLLIIYILPLVGIIAYLSFGELHLGKRRAERAKAMWPSTARWLSELKECQHIFANSNSEVASPLFQLCERRQGINGVKGNQLQLLTTTDDTLKALVRDIELARHNIEMVFYIWQPGGLVDQVAESLMAAARRGVHCRLLLDSAGSKQFFRSPYPAMMRNAGIEVVEALKVNVFRMFLRRMDLRQHRKIVLIDNYVAYTGSMNMVDPRFFKQDAGVGQWIDMMARMEGPVATTLGIVYACDWEIETGKRILPPPPDANIMPFEEETGHTIQVIASGPGFPEEMIHQALLTAVYAAREQLIMTTPYFVPSDDLLHAICTAAQRGVDVSIIVPRENDSMMVRWASRAFFTELLNAGVKIYQFEGGLLHSKSVLVDGQLSLVGTVNLDMRSLWLNFEITLVIDDDGFGADLAQVQDDYIARSALLDGELWNKRPLWHRVTERLFYFFSPLL.

The next 2 membrane-spanning stretches (helical) occupy residues 3-23 (TFYTVISWLSVFGYWLLIAGV) and 38-58 (MAWLLIIYILPLVGIIAYLSF). 2 PLD phosphodiesterase domains span residues 219–246 (MDLRQHRKIVLIDNYVAYTGSMNMVDPR) and 399–426 (EGGLLHSKSVLVDGQLSLVGTVNLDMRS). Catalysis depends on residues His224, Lys226, Asp231, His404, Lys406, and Asp411.

Belongs to the phospholipase D family. Cardiolipin synthase subfamily. ClsA sub-subfamily.

The protein resides in the cell inner membrane. The enzyme catalyses 2 a 1,2-diacyl-sn-glycero-3-phospho-(1'-sn-glycerol) = a cardiolipin + glycerol. Catalyzes the reversible phosphatidyl group transfer from one phosphatidylglycerol molecule to another to form cardiolipin (CL) (diphosphatidylglycerol) and glycerol. The polypeptide is Cardiolipin synthase A (Yersinia pseudotuberculosis serotype O:3 (strain YPIII)).